The primary structure comprises 430 residues: Asparagine--tRNA ligase (430 aa).

This sequence belongs to the class-II aminoacyl-tRNA synthetase family. As to quaternary structure, homodimer.

The protein resides in the cytoplasm. The enzyme catalyses tRNA(Asn) + L-asparagine + ATP = L-asparaginyl-tRNA(Asn) + AMP + diphosphate + H(+). The protein is Asparagine--tRNA ligase of Listeria innocua serovar 6a (strain ATCC BAA-680 / CLIP 11262).